A 703-amino-acid polypeptide reads, in one-letter code: Ubiquitin-like modifier-activating enzyme ATG7 (703 aa).

Ala-2 carries the post-translational modification N-acetylalanine. The FAP motif motif lies at 15–17 (FAP). A Glycyl lysine isopeptide (Lys-Gly) (interchain with G-Cter in ubiquitin) cross-link involves residue Lys-45. Cys-572 acts as the Glycyl thioester intermediate in catalysis. A Phosphoserine modification is found at Ser-698.

This sequence belongs to the ATG7 family. As to quaternary structure, homodimer. Interacts with ATG3; this interaction is essential for the transfer of ATG8-like proteins's thioester from ATG7 to ATG3 and plays a role in the conjugation of ATG12 to ATG5. Interacts with ATG12. Forms intermediate conjugates with GABARAPL1. Forms intermediate conjugates with ATG8-like proteins such as GABARAP, GABARAPL2 or MAP1LC3A. Interacts with EP300 acetyltransferase. Interacts with FOXO1. In terms of processing, acetylated by EP300. Polyubiquitinated on Lys-45 via 'Lys-63'-linked ubiquitin by TRIM32; this modification positiely regulates ATG8 and ATG12 activating enzyme activity leading to initiation of autophagy under metabolic stress. In terms of tissue distribution, widely expressed, especially in kidney, liver, lymph nodes and bone marrow.

It localises to the cytoplasm. Its subcellular location is the preautophagosomal structure. Functionally, E1-like activating enzyme involved in the 2 ubiquitin-like systems required for cytoplasm to vacuole transport (Cvt) and autophagy. Activates ATG12 for its conjugation with ATG5 as well as the ATG8 family proteins for their conjugation with phosphatidylethanolamine. Both systems are needed for the ATG8 association to Cvt vesicles and autophagosomes membranes. Required for autophagic death induced by caspase-8 inhibition. Facilitates LC3-I lipidation with phosphatidylethanolamine to form LC3-II which is found on autophagosomal membranes. Required for mitophagy which contributes to regulate mitochondrial quantity and quality by eliminating the mitochondria to a basal level to fulfill cellular energy requirements and preventing excess ROS production. Modulates p53/TP53 activity to regulate cell cycle and survival during metabolic stress. Also plays a key role in the maintenance of axonal homeostasis, the prevention of axonal degeneration, the maintenance of hematopoietic stem cells, the formation of Paneth cell granules, as well as in adipose differentiation. Plays a role in regulating the liver clock and glucose metabolism by mediating the autophagic degradation of CRY1 (clock repressor) in a time-dependent manner. The chain is Ubiquitin-like modifier-activating enzyme ATG7 from Homo sapiens (Human).